The following is a 274-amino-acid chain: Nitrogenase iron protein (274 aa).

8 to 15 (GKGGIGKS) is a binding site for ATP. C94 contacts [4Fe-4S] cluster. R97 is subject to ADP-ribosylarginine; by dinitrogenase reductase ADP-ribosyltransferase. Residue C131 participates in [4Fe-4S] cluster binding.

Belongs to the NifH/BchL/ChlL family. In terms of assembly, homodimer. Requires [4Fe-4S] cluster as cofactor. Post-translationally, the reversible ADP-ribosylation of Arg-97 inactivates the nitrogenase reductase and regulates nitrogenase activity.

The enzyme catalyses N2 + 8 reduced [2Fe-2S]-[ferredoxin] + 16 ATP + 16 H2O = H2 + 8 oxidized [2Fe-2S]-[ferredoxin] + 2 NH4(+) + 16 ADP + 16 phosphate + 6 H(+). Its function is as follows. The key enzymatic reactions in nitrogen fixation are catalyzed by the nitrogenase complex, which has 2 components: the iron protein and the molybdenum-iron protein. This is Nitrogenase iron protein from Chlorobium chlorochromatii (strain CaD3).